Reading from the N-terminus, the 391-residue chain is Protein ABCI12, chloroplastic (391 aa).

The N-terminal 63 residues, 1 to 63, are a transit peptide targeting the chloroplast; sequence MNHSNLANPT…LAAKRVFIVR (63 aa). The next 5 membrane-spanning stretches (helical) occupy residues 134–154, 168–188, 229–249, 263–283, and 370–390; these read ANLV…ILVL, LLSG…PPML, VGST…ICLA, FLFP…TLLL, and FASV…EYFL.

Its subcellular location is the plastid. It localises to the chloroplast. It is found in the membrane. This chain is Protein ABCI12, chloroplastic (ABCI12), found in Arabidopsis thaliana (Mouse-ear cress).